We begin with the raw amino-acid sequence, 243 residues long: Pyridoxine 5'-phosphate synthase (243 aa).

Residue asparagine 9 coordinates 3-amino-2-oxopropyl phosphate. Position 11–12 (11–12 (DH)) interacts with 1-deoxy-D-xylulose 5-phosphate. Position 20 (arginine 20) interacts with 3-amino-2-oxopropyl phosphate. Catalysis depends on histidine 45, which acts as the Proton acceptor. 1-deoxy-D-xylulose 5-phosphate contacts are provided by arginine 47 and histidine 52. Glutamate 72 (proton acceptor) is an active-site residue. 1-deoxy-D-xylulose 5-phosphate is bound at residue threonine 102. Catalysis depends on histidine 193, which acts as the Proton donor. Residues glycine 194 and 215–216 (GH) each bind 3-amino-2-oxopropyl phosphate.

Belongs to the PNP synthase family. As to quaternary structure, homooctamer; tetramer of dimers.

The protein resides in the cytoplasm. It catalyses the reaction 3-amino-2-oxopropyl phosphate + 1-deoxy-D-xylulose 5-phosphate = pyridoxine 5'-phosphate + phosphate + 2 H2O + H(+). It participates in cofactor biosynthesis; pyridoxine 5'-phosphate biosynthesis; pyridoxine 5'-phosphate from D-erythrose 4-phosphate: step 5/5. Functionally, catalyzes the complicated ring closure reaction between the two acyclic compounds 1-deoxy-D-xylulose-5-phosphate (DXP) and 3-amino-2-oxopropyl phosphate (1-amino-acetone-3-phosphate or AAP) to form pyridoxine 5'-phosphate (PNP) and inorganic phosphate. This Salmonella typhi protein is Pyridoxine 5'-phosphate synthase.